A 355-amino-acid chain; its full sequence is Poly(3-hydroxyalkanoate) polymerase subunit PhaC (355 aa).

The 266-residue stretch at 68–333 folds into the AB hydrolase-1 domain; sequence PLLIVYALVN…LAFPGGHIGI (266 aa). The active site involves cysteine 148.

Belongs to the PHA/PHB synthase family. Type III PhaC subfamily. In terms of assembly, forms a heterodimer with PhaE, which may multimerize in the presence of 3-hydroxybutyryl-CoA.

Its subcellular location is the cytoplasm. It carries out the reaction (3R)-3-hydroxybutanoyl-CoA + [(3R)-hydroxybutanoate](n) = [(3R)-hydroxybutanoate](n+1) + CoA. It participates in biopolymer metabolism; poly-(R)-3-hydroxybutanoate biosynthesis. Functionally, polymerizes D(-)-3-hydroxybutyryl-CoA to create PHB which consists of thousands of hydroxybutyrate molecules linked end to end. PHB serves as an intracellular energy reserve material when cells grow under conditions of nutrient limitation. In Thiocystis violacea, this protein is Poly(3-hydroxyalkanoate) polymerase subunit PhaC.